Reading from the N-terminus, the 268-residue chain is Ribosomal RNA small subunit methyltransferase A (268 aa).

6 residues coordinate S-adenosyl-L-methionine: N12, L14, G38, E59, D82, and N107.

It belongs to the class I-like SAM-binding methyltransferase superfamily. rRNA adenine N(6)-methyltransferase family. RsmA subfamily.

The protein localises to the cytoplasm. It carries out the reaction adenosine(1518)/adenosine(1519) in 16S rRNA + 4 S-adenosyl-L-methionine = N(6)-dimethyladenosine(1518)/N(6)-dimethyladenosine(1519) in 16S rRNA + 4 S-adenosyl-L-homocysteine + 4 H(+). Its function is as follows. Specifically dimethylates two adjacent adenosines (A1518 and A1519) in the loop of a conserved hairpin near the 3'-end of 16S rRNA in the 30S particle. May play a critical role in biogenesis of 30S subunits. This chain is Ribosomal RNA small subunit methyltransferase A, found in Onion yellows phytoplasma (strain OY-M).